The chain runs to 434 residues: UDP-N-acetylmuramate--L-alanine ligase (434 aa).

110–116 (GAHGKTS) is a binding site for ATP.

The protein belongs to the MurCDEF family.

It is found in the cytoplasm. It carries out the reaction UDP-N-acetyl-alpha-D-muramate + L-alanine + ATP = UDP-N-acetyl-alpha-D-muramoyl-L-alanine + ADP + phosphate + H(+). Its pathway is cell wall biogenesis; peptidoglycan biosynthesis. Its function is as follows. Cell wall formation. The polypeptide is UDP-N-acetylmuramate--L-alanine ligase (Limosilactobacillus reuteri (strain DSM 20016) (Lactobacillus reuteri)).